Reading from the N-terminus, the 785-residue chain is SUN domain-containing protein 1 (785 aa).

Residues 1 to 138 are LMNA-binding; that stretch reads MDFSRLHMYS…TRRPPVLDES (138 aa). Over 1 to 288 the chain is Nuclear; sequence MDFSRLHMYS…VFLLTRCLRN (288 aa). Ser-48, Ser-100, and Ser-138 each carry phosphoserine. Lys-195 participates in a covalent cross-link: Glycyl lysine isopeptide (Lys-Gly) (interchain with G-Cter in SUMO2). Residues 209 to 309 form an SYNE2-binding region; sequence SRVYSRDRNQ…FLLLAGLSLR (101 aa). The EMD-binding stretch occupies residues 223–309; that stretch reads LLQILRRIGA…FLLLAGLSLR (87 aa). Residues 289-308 form a helical membrane-spanning segment; the sequence is ICKFLVLLIPLFLLLAGLSL. The Perinuclear space portion of the chain corresponds to 309–785; that stretch reads RGQGNFFSFL…RFRVHGEPVK (477 aa). A phosphoserine mark is found at Asp-333 and Ser-344. Residues 428–495 are a coiled coil; the sequence is HQEHEVRMSH…KSELSSWRHV (68 aa). The sufficient for interaction with SYNE1 and SYNE2 stretch occupies residues 574-785; that stretch reads TSEAVVSAVS…RFRVHGEPVK (212 aa). Residues 622-784 form the SUN domain; sequence GGSILSTRCS…YRFRVHGEPV (163 aa).

In terms of assembly, core component of the LINC complex which is composed of inner nuclear membrane SUN domain-containing proteins coupled to outer nuclear membrane KASH domain-containing nesprins. SUN and KASH domain-containing proteins seem to bind each other promiscuously; however, differentially expression of LINC complex constituents is giving rise to specific assemblies. At least SUN1/2-containing core LINC complexes are proposed to be hexameric composed of three protomers of each KASH and SUN domain-containing protein. Interacts with KASH5 (via the last 22 amino acids); this interaction mediates KASH5 telomere localization by forming a SUN1:KASH5 LINC complex. May interact with SYNE3. Interacts with SYNE2 and SYNE1; probably forming respective LINC complexes. Interacts with A-type lamin with a strong preference for unprocessed A-type lamin compared with the mature protein. Interaction with lamins B1 and C is hardly detectable. Interacts with NAT10. Interacts with EMD and TSNAX. Associates with the nuclear pore complex (NPC). Interacts with CCDC79/TERB1; promoting the accumulation of the LINC complex complexes at the telomere-nuclear envelope attachment sites. Interacts (via KASH domain) with TMEM258. Post-translationally, the disulfide bond with KASH domain-containing nesprins is required for stability of the respective LINC complexes under tensile forces.

The protein resides in the nucleus inner membrane. In terms of biological role, as a component of the LINC (LInker of Nucleoskeleton and Cytoskeleton) complex involved in the connection between the nuclear lamina and the cytoskeleton. The nucleocytoplasmic interactions established by the LINC complex play an important role in the transmission of mechanical forces across the nuclear envelope and in nuclear movement and positioning. Required for interkinetic nuclear migration (INM) and essential for nucleokinesis and centrosome-nucleus coupling during radial neuronal migration in the cerebral cortex and during glial migration. Involved in telomere attachment to nuclear envelope in the prophase of meiosis implicating a SUN1/2:KASH5 LINC complex in which SUN1 and SUN2 seem to act at least partial redundantly. Required for gametogenesis and involved in selective gene expression of coding and non-coding RNAs needed for gametogenesis. Helps to define the distribution of nuclear pore complexes (NPCs). Required for efficient localization of SYNE4 in the nuclear envelope. May be involved in nuclear remodeling during sperm head formation in spermatogenesis. May play a role in DNA repair by suppressing non-homologous end joining repair to facilitate the repair of DNA cross-links. This is SUN domain-containing protein 1 from Homo sapiens (Human).